Reading from the N-terminus, the 305-residue chain is Oxygen-dependent coproporphyrinogen-III oxidase (305 aa).

Serine 92 provides a ligand contact to substrate. A divalent metal cation is bound by residues histidine 96 and histidine 106. The active-site Proton donor is histidine 106. Residue 108-110 (NVR) coordinates substrate. A divalent metal cation contacts are provided by histidine 145 and histidine 175. The important for dimerization stretch occupies residues 239-274 (YVEFNLLFDRGTLFGLQSGGRAESILISLPPLVRWE). 257–259 (GGR) contacts substrate.

The protein belongs to the aerobic coproporphyrinogen-III oxidase family. Homodimer. It depends on a divalent metal cation as a cofactor.

Its subcellular location is the cytoplasm. The enzyme catalyses coproporphyrinogen III + O2 + 2 H(+) = protoporphyrinogen IX + 2 CO2 + 2 H2O. Its pathway is porphyrin-containing compound metabolism; protoporphyrin-IX biosynthesis; protoporphyrinogen-IX from coproporphyrinogen-III (O2 route): step 1/1. Functionally, involved in the heme biosynthesis. Catalyzes the aerobic oxidative decarboxylation of propionate groups of rings A and B of coproporphyrinogen-III to yield the vinyl groups in protoporphyrinogen-IX. The chain is Oxygen-dependent coproporphyrinogen-III oxidase from Xylella fastidiosa (strain Temecula1 / ATCC 700964).